The primary structure comprises 269 residues: BAG family molecular chaperone regulator 4 (269 aa).

Residues 1–40 (MMHNSTEESEWEVRPGGMLVQRRDDAASSDHKPLQDPDSA) form a disordered region. Positions 21–35 (QRRDDAASSDHKPLQ) are enriched in basic and acidic residues. A Ubiquitin-like domain is found at 46-122 (QTIRITVSHG…LVVVVEDTNK (77 aa)). Residues 138-219 (AIAAVNAVTG…NLQEAVDKLK (82 aa)) form the BAG domain. The tract at residues 241–269 (SFGNGVGSLNPPPPASPSANVTQDWEKFD) is disordered.

Binds to the ATPase domain of HSP70/HSC70 chaperones. Interacts with HSP70-1. In terms of tissue distribution, detected in stems, leaves, flowers and roots.

Its function is as follows. Co-chaperone that regulates diverse cellular pathways, such as programmed cell death and stress responses. This Arabidopsis thaliana (Mouse-ear cress) protein is BAG family molecular chaperone regulator 4 (BAG4).